A 307-amino-acid polypeptide reads, in one-letter code: Fructokinase (307 aa).

It belongs to the carbohydrate kinase PfkB family.

It catalyses the reaction D-fructose + ATP = D-fructose 6-phosphate + ADP + H(+). This Escherichia coli protein is Fructokinase (cscK).